The chain runs to 360 residues: Archaemetzincin-2 (360 aa).

His254 contacts Zn(2+). Glu255 acts as the Proton acceptor in catalysis. Zn(2+) is bound by residues His258, His264, Cys265, Cys270, Cys289, and Cys292.

Belongs to the peptidase M54 family. It depends on Zn(2+) as a cofactor. In terms of tissue distribution, down-regulated in testis from patients with maturation arrest (MA) or Sertoli cell-only syndrome (SCOS).

In terms of biological role, probable zinc metalloprotease. The sequence is that of Archaemetzincin-2 (AMZ2) from Homo sapiens (Human).